We begin with the raw amino-acid sequence, 263 residues long: Flagellar brake protein YcgR (263 aa).

Positions 1–21 (MAELSTPSPASPAPLDGGRGD) are disordered. The PilZ domain occupies 133-250 (QRREFYRLQV…DTRIQRYIFK (118 aa)).

This sequence belongs to the YcgR family. As to quaternary structure, monomer. Interacts with the flagellar basal bodies.

The protein localises to the bacterial flagellum basal body. Its function is as follows. Acts as a flagellar brake, regulating swimming and swarming in a bis-(3'-5') cyclic diguanylic acid (c-di-GMP)-dependent manner. Binds 1 c-di-GMP dimer per subunit. Increasing levels of c-di-GMP lead to decreased motility. In Thauera aminoaromatica, this protein is Flagellar brake protein YcgR.